The following is a 469-amino-acid chain: Solute carrier family 52, riboflavin transporter, member 3 (469 aa).

The Cytoplasmic segment spans residues 1 to 2 (MA). Residues 3–23 (FLMHLLVCVFGMGSWVTINGL) form a helical membrane-spanning segment. Residues 24–43 (WVELPLLVMELPEGWYLPSY) are Extracellular-facing. The chain crosses the membrane as a helical span at residues 44-64 (LTVVIQLANIGPLLVTLLHHF). Residues 65–71 (RPSCLSE) are Cytoplasmic-facing. The helical transmembrane segment at 72–92 (VPIIFTLLGVGTVTCIIFAFL) threads the bilayer. The Extracellular portion of the chain corresponds to 93–97 (WNMTS). The N-linked (GlcNAc...) asparagine glycan is linked to Asn-94. A helical transmembrane segment spans residues 98-118 (WVLDGHHSIAFLVLTFFLALV). Topologically, residues 119–137 (DCTSSVTFLPFMSRLPTYY) are cytoplasmic. Residues 138 to 158 (LTTFFVGEGLSGLLPALVALA) form a helical membrane-spanning segment. The Extracellular portion of the chain corresponds to 159–220 (QGSGLTTCVN…SRYLPAHFSP (62 aa)). Asn-168 carries N-linked (GlcNAc...) asparagine glycosylation. Residues 221 to 241 (LVFFLLLSIMMACCLVAFFVL) traverse the membrane as a helical segment. Over 242–292 (QRQPRCWEASVEDLLNDQVTLHSIRPREENDLGPAGTVDSSQGQGYLEEKA) the chain is Cytoplasmic. Phosphoserine is present on Ser-251. Residues 293-313 (APCCPAHLAFIYTLVAFVNAL) form a helical membrane-spanning segment. Residues 314 to 335 (TNGMLPSVQTYSCLSYGPVAYH) are Extracellular-facing. Residues 336–356 (LAATLSIVANPLASLVSMFLP) form a helical membrane-spanning segment. Over 357 to 359 (NRS) the chain is Cytoplasmic. The chain crosses the membrane as a helical span at residues 360–380 (LLFLGVLSVLGTCFGGYNMAM). The Extracellular portion of the chain corresponds to 381-396 (AVMSPCPLLQGHWGGE). Cys-386 and Cys-463 are joined by a disulfide. A helical membrane pass occupies residues 397–417 (VLIVASWVLFSGCLSYVKVML). The Cytoplasmic segment spans residues 418 to 427 (GVVLRDLSRS). The helical transmembrane segment at 428-448 (ALLWCGAAVQLGSLLGALLMF) threads the bilayer. Residues 449 to 469 (PLVNVLRLFSSADFCNLHCPA) lie on the Extracellular side of the membrane.

Belongs to the riboflavin transporter family. As to expression, predominantly expressed in testis. Highly expressed in small intestine and prostate.

It localises to the apical cell membrane. Its subcellular location is the cell membrane. The protein localises to the nucleus membrane. The protein resides in the cytoplasm. The catalysed reaction is riboflavin(in) = riboflavin(out). Activity is strongly inhibited by riboflavin analogs, such as lumiflavin, flavin mononucleotide (FMN), flavin adenine dinucleotide (FAD), by methylene blue, and to a lesser extent by amiloride. Riboflavin transport is Na(+)-independent at low pH but significantly reduced by Na(+) depletion under neutral pH conditions. In terms of biological role, plasma membrane transporter mediating the uptake by cells of the water soluble vitamin B2/riboflavin that plays a key role in biochemical oxidation-reduction reactions of the carbohydrate, lipid, and amino acid metabolism. Humans are unable to synthesize vitamin B2/riboflavin and must obtain it via intestinal absorption. This Homo sapiens (Human) protein is Solute carrier family 52, riboflavin transporter, member 3 (SLC52A3).